A 241-amino-acid polypeptide reads, in one-letter code: MLTKKQLQLLEFIHKRLQKDGVPPSFDEMKTALDLRSKSGIHRLITALEERGFIRRLAHRARAIEVIRLPDSLGGGGALGAASDGFQPKVIAGGRGDSADGGAAAELKPVADTGATELTIMGRIAAGVPIEAINQAAAHVAVPNAMLSSSGQHYALEVRGDSMIDAGINDGDVVVIRETDAADNGDIVVALVEGHEATLKRFERKGRMIELHAANPAYPTRSYTEDQVKVQGRLVGLIRTY.

The segment at residues 26-46 (FDEMKTALDLRSKSGIHRLIT) is a DNA-binding region (H-T-H motif). Residues Ser162 and Lys200 each act as for autocatalytic cleavage activity in the active site.

Belongs to the peptidase S24 family. Homodimer.

The enzyme catalyses Hydrolysis of Ala-|-Gly bond in repressor LexA.. In terms of biological role, represses a number of genes involved in the response to DNA damage (SOS response), including recA and lexA. In the presence of single-stranded DNA, RecA interacts with LexA causing an autocatalytic cleavage which disrupts the DNA-binding part of LexA, leading to derepression of the SOS regulon and eventually DNA repair. This chain is LexA repressor, found in Ruegeria sp. (strain TM1040) (Silicibacter sp.).